The sequence spans 376 residues: DNA replication and repair protein RecF (376 aa).

Residue 30-37 (GNNAQGKS) participates in ATP binding.

It belongs to the RecF family.

The protein localises to the cytoplasm. In terms of biological role, the RecF protein is involved in DNA metabolism; it is required for DNA replication and normal SOS inducibility. RecF binds preferentially to single-stranded, linear DNA. It also seems to bind ATP. The sequence is that of DNA replication and repair protein RecF from Nostoc sp. (strain PCC 7120 / SAG 25.82 / UTEX 2576).